The chain runs to 551 residues: Arginine--tRNA ligase (551 aa).

The 'HIGH' region motif lies at 125–135; sequence ANPTGPLHIGH.

It belongs to the class-I aminoacyl-tRNA synthetase family. Monomer.

The protein resides in the cytoplasm. It catalyses the reaction tRNA(Arg) + L-arginine + ATP = L-arginyl-tRNA(Arg) + AMP + diphosphate. The chain is Arginine--tRNA ligase from Nitratidesulfovibrio vulgaris (strain ATCC 29579 / DSM 644 / CCUG 34227 / NCIMB 8303 / VKM B-1760 / Hildenborough) (Desulfovibrio vulgaris).